We begin with the raw amino-acid sequence, 116 residues long: Phosphoribosyl-ATP pyrophosphatase (116 aa).

The protein belongs to the PRA-PH family.

It is found in the cytoplasm. The catalysed reaction is 1-(5-phospho-beta-D-ribosyl)-ATP + H2O = 1-(5-phospho-beta-D-ribosyl)-5'-AMP + diphosphate + H(+). The protein operates within amino-acid biosynthesis; L-histidine biosynthesis; L-histidine from 5-phospho-alpha-D-ribose 1-diphosphate: step 2/9. This chain is Phosphoribosyl-ATP pyrophosphatase, found in Bordetella avium (strain 197N).